We begin with the raw amino-acid sequence, 521 residues long: Putative FNIP repeat-containing protein L162 (521 aa).

2 FNIP repeats span residues Phe179 to Lys221 and Tyr222 to Arg263.

This chain is Putative FNIP repeat-containing protein L162, found in Acanthamoeba polyphaga mimivirus (APMV).